A 215-amino-acid chain; its full sequence is Interleukin-12 subunit alpha (215 aa).

The first 22 residues, 1–22 (MCQSRYLLFLATLVLLNHLTSA), serve as a signal peptide directing secretion. Intrachain disulfides connect Cys33–Cys106, Cys60–Cys192, and Cys81–Cys119. N-linked (GlcNAc...) asparagine glycans are attached at residues Asn35, Asn89, and Asn167.

This sequence belongs to the IL-6 superfamily. Heterodimer with IL12B; disulfide-linked. This heterodimer is known as interleukin IL-12. Heterodimer with EBI3/IL27B; not disulfide-linked. This heterodimer is known as interleukin IL-35. Interacts with NBR1; this interaction promotes IL-12 secretion.

The protein resides in the secreted. Its function is as follows. Heterodimerizes with IL12B to form the IL-12 cytokine or with EBI3/IL27B to form the IL-35 cytokine. IL-12 is primarily produced by professional antigen-presenting cells (APCs) such as B-cells and dendritic cells (DCs) as well as macrophages and granulocytes and regulates T-cell and natural killer-cell responses, induces the production of interferon-gamma (IFN-gamma), favors the differentiation of T-helper 1 (Th1) cells and is an important link between innate resistance and adaptive immunity. Mechanistically, exerts its biological effects through a receptor composed of IL12R1 and IL12R2 subunits. Binding to the receptor results in the rapid tyrosine phosphorylation of a number of cellular substrates including the JAK family kinases TYK2 and JAK2. In turn, recruited STAT4 gets phosphorylated and translocates to the nucleus where it regulates cytokine/growth factor responsive genes. As part of IL-35, plays essential roles in maintaining the immune homeostasis of the liver microenvironment and also functions as an immune-suppressive cytokine. Mediates biological events through unconventional receptors composed of IL12RB2 and gp130/IL6ST heterodimers or homodimers. Signaling requires the transcription factors STAT1 and STAT4, which form a unique heterodimer that binds to distinct DNA sites. This chain is Interleukin-12 subunit alpha (Il12a), found in Rattus norvegicus (Rat).